The primary structure comprises 72 residues: Translation initiation factor IF-1 (72 aa).

Residues 1-72 (MAKDDVIEIE…TKGRITYRFK (72 aa)) enclose the S1-like domain.

The protein belongs to the IF-1 family. In terms of assembly, component of the 30S ribosomal translation pre-initiation complex which assembles on the 30S ribosome in the order IF-2 and IF-3, IF-1 and N-formylmethionyl-tRNA(fMet); mRNA recruitment can occur at any time during PIC assembly.

The protein localises to the cytoplasm. One of the essential components for the initiation of protein synthesis. Stabilizes the binding of IF-2 and IF-3 on the 30S subunit to which N-formylmethionyl-tRNA(fMet) subsequently binds. Helps modulate mRNA selection, yielding the 30S pre-initiation complex (PIC). Upon addition of the 50S ribosomal subunit IF-1, IF-2 and IF-3 are released leaving the mature 70S translation initiation complex. This Latilactobacillus sakei subsp. sakei (strain 23K) (Lactobacillus sakei subsp. sakei) protein is Translation initiation factor IF-1.